A 385-amino-acid chain; its full sequence is tRNA (guanine(26)-N(2))-dimethyltransferase (385 aa).

The Trm1 methyltransferase domain maps to 1 to 379 (MNITEGVVEL…ATIAEIRSAT (379 aa)). S-adenosyl-L-methionine contacts are provided by Arg-37, Arg-67, Asp-82, Asp-108, and Ala-109. Residues Cys-247, Cys-250, Cys-267, and Cys-270 each contribute to the Zn(2+) site.

This sequence belongs to the class I-like SAM-binding methyltransferase superfamily. Trm1 family.

It carries out the reaction guanosine(26) in tRNA + 2 S-adenosyl-L-methionine = N(2)-dimethylguanosine(26) in tRNA + 2 S-adenosyl-L-homocysteine + 2 H(+). Its function is as follows. Dimethylates a single guanine residue at position 26 of a number of tRNAs using S-adenosyl-L-methionine as donor of the methyl groups. This Haloquadratum walsbyi (strain DSM 16790 / HBSQ001) protein is tRNA (guanine(26)-N(2))-dimethyltransferase.